The chain runs to 314 residues: DNA-directed RNA polymerase subunit alpha (314 aa).

An alpha N-terminal domain (alpha-NTD) region spans residues 1 to 228 (MIEIEKPKIE…EHLNIFVGLT (228 aa)). The segment at 246 to 314 (EKVLEMTIEE…ELGLGLRKDD (69 aa)) is alpha C-terminal domain (alpha-CTD).

Belongs to the RNA polymerase alpha chain family. In terms of assembly, homodimer. The RNAP catalytic core consists of 2 alpha, 1 beta, 1 beta' and 1 omega subunit. When a sigma factor is associated with the core the holoenzyme is formed, which can initiate transcription.

The enzyme catalyses RNA(n) + a ribonucleoside 5'-triphosphate = RNA(n+1) + diphosphate. Its function is as follows. DNA-dependent RNA polymerase catalyzes the transcription of DNA into RNA using the four ribonucleoside triphosphates as substrates. In Bacillus pumilus (strain SAFR-032), this protein is DNA-directed RNA polymerase subunit alpha.